The sequence spans 721 residues: Phosphomethylpyrimidine synthase (721 aa).

Residues Asn256, Met285, Tyr314, His350, 370–372, 411–414, and Glu450 each bind substrate; these read SRG and DGMR. Position 454 (His454) interacts with Zn(2+). Tyr477 contributes to the substrate binding site. His518 serves as a coordination point for Zn(2+). Residues Cys598, Cys601, and Cys606 each coordinate [4Fe-4S] cluster.

This sequence belongs to the ThiC family. In terms of assembly, homodimer. [4Fe-4S] cluster is required as a cofactor.

It catalyses the reaction 5-amino-1-(5-phospho-beta-D-ribosyl)imidazole + S-adenosyl-L-methionine = 4-amino-2-methyl-5-(phosphooxymethyl)pyrimidine + CO + 5'-deoxyadenosine + formate + L-methionine + 3 H(+). The protein operates within cofactor biosynthesis; thiamine diphosphate biosynthesis. In terms of biological role, catalyzes the synthesis of the hydroxymethylpyrimidine phosphate (HMP-P) moiety of thiamine from aminoimidazole ribotide (AIR) in a radical S-adenosyl-L-methionine (SAM)-dependent reaction. The polypeptide is Phosphomethylpyrimidine synthase (Shewanella oneidensis (strain ATCC 700550 / JCM 31522 / CIP 106686 / LMG 19005 / NCIMB 14063 / MR-1)).